Consider the following 220-residue polypeptide: CASP-like protein 4B1 (220 aa).

Residues 1–74 (MAMVTTEAAA…RWRREDMLDK (74 aa)) lie on the Cytoplasmic side of the membrane. The disordered stretch occupies residues 13–56 (TTAATAAAEKPQDVEKPDYAPYNGASTTADGGTGARARRGDGGG). The chain crosses the membrane as a helical span at residues 75 to 95 (SPLALHAAAAIFAFVALVLVA). At 96–109 (SNQHGDWMQFDRYQ) the chain is on the extracellular side. The chain crosses the membrane as a helical span at residues 110–127 (EYRYLLAIASLALLYSLA). Over 128–152 (QAARHAHRMRGGVDPVSSASARLLD) the chain is Cytoplasmic. Residues 153-173 (FVGDQVVAYLLMSALSAAVPI) traverse the membrane as a helical segment. At 174 to 188 (TNRMRSAVVNNFTDA) the chain is on the extracellular side. Asn-184 is a glycosylation site (N-linked (GlcNAc...) asparagine). The chain crosses the membrane as a helical span at residues 189–209 (TAAAISMAFFSFVALALSAVV). Over 210–220 (SGYKLSKQTYM) the chain is Cytoplasmic.

This sequence belongs to the Casparian strip membrane proteins (CASP) family. Homodimer and heterodimers.

Its subcellular location is the cell membrane. In Sorghum bicolor (Sorghum), this protein is CASP-like protein 4B1.